Reading from the N-terminus, the 44-residue chain is Antimicrobial peptide 1b (44 aa).

One can recognise a Chitin-binding type-1 domain in the interval 1–42 (AQKCGEQGRGAKCPNCLCCGRYGFCGSTPDYCGVGCQSQCRG). Disulfide bonds link cysteine 4–cysteine 19, cysteine 13–cysteine 25, cysteine 16–cysteine 43, cysteine 18–cysteine 32, and cysteine 36–cysteine 40.

Post-translationally, contains 5 disulfide bonds.

Its function is as follows. Binds chitin. Has antifungal activity against F.oxysporum 16/10 (IC(50)=4.1 uM) and B.sorokiniana 6/10 (IC(50)=2.7 uM). Inhibits germination of fungal spores. In Leymus arenarius (Lyme grass), this protein is Antimicrobial peptide 1b.